Reading from the N-terminus, the 291-residue chain is Bis(5'-nucleosyl)-tetraphosphatase, symmetrical (291 aa).

This sequence belongs to the Ap4A hydrolase family.

The catalysed reaction is P(1),P(4)-bis(5'-adenosyl) tetraphosphate + H2O = 2 ADP + 2 H(+). Functionally, hydrolyzes diadenosine 5',5'''-P1,P4-tetraphosphate to yield ADP. This is Bis(5'-nucleosyl)-tetraphosphatase, symmetrical from Coxiella burnetii (strain CbuK_Q154) (Coxiella burnetii (strain Q154)).